Here is a 195-residue protein sequence, read N- to C-terminus: SPI-2 type 3 secretion system translocon protein SctB (195 aa).

A coiled-coil region spans residues 44–80 (KLMELAKKLRDIMRSYNVEKQRLAWELQVNVLQTQMK). 3 helical membrane-spanning segments follow: residues 90–110 (MITA…GAVG), 115–135 (LIAG…GAGV), and 170–190 (EIMQ…AEIL).

Belongs to the SctB/EspB family. The core secretion machinery of the T3SS is composed of approximately 20 different proteins, including cytoplasmic components, a base, an export apparatus and a needle. This subunit is involved in the formation of a pore, called the translocon, in host membrane. May form a complex with SseB and SseC/SctE2. SseB is required for correct localization of SseD/SctB2 on the bacterial cell surface. Binds to the chaperone SseA.

It localises to the secreted. It is found in the cell surface. The protein resides in the host membrane. In terms of biological role, component of the type III secretion system 2 (SPI-2 T3SS), also called injectisome, which is used to inject bacterial effector proteins into eukaryotic host cells. SseC/SctE2 and SseD/SctB2 are inserted into the host membrane where they form a pore and allow the translocation of effector proteins into the cytosol of target cells. Functionally, required for the translocation of SPI-2 effector proteins. Required for systemic Salmonella infection of the mouse. Essential for SpvB-induced actin depolymerization in the host cell cytoplasm. The chain is SPI-2 type 3 secretion system translocon protein SctB from Salmonella typhimurium (strain LT2 / SGSC1412 / ATCC 700720).